We begin with the raw amino-acid sequence, 413 residues long: Arginine biosynthesis bifunctional protein ArgJ (413 aa).

Residues Thr158, Lys184, Thr195, Glu285, Asn408, and Ser413 each contribute to the substrate site. Thr195 functions as the Nucleophile in the catalytic mechanism.

It belongs to the ArgJ family. As to quaternary structure, heterotetramer of two alpha and two beta chains.

The protein localises to the cytoplasm. It carries out the reaction N(2)-acetyl-L-ornithine + L-glutamate = N-acetyl-L-glutamate + L-ornithine. The catalysed reaction is L-glutamate + acetyl-CoA = N-acetyl-L-glutamate + CoA + H(+). The protein operates within amino-acid biosynthesis; L-arginine biosynthesis; L-ornithine and N-acetyl-L-glutamate from L-glutamate and N(2)-acetyl-L-ornithine (cyclic): step 1/1. Its pathway is amino-acid biosynthesis; L-arginine biosynthesis; N(2)-acetyl-L-ornithine from L-glutamate: step 1/4. Its function is as follows. Catalyzes two activities which are involved in the cyclic version of arginine biosynthesis: the synthesis of N-acetylglutamate from glutamate and acetyl-CoA as the acetyl donor, and of ornithine by transacetylation between N(2)-acetylornithine and glutamate. The protein is Arginine biosynthesis bifunctional protein ArgJ of Agrobacterium fabrum (strain C58 / ATCC 33970) (Agrobacterium tumefaciens (strain C58)).